The primary structure comprises 133 residues: Egg protein CP422 (133 aa).

The N-terminal stretch at 1 to 21 (MHECMIVFFIFAVVSIYYADA) is a signal peptide. 3 disulfides stabilise this stretch: Cys-107–Cys-121, Cys-114–Cys-125, and Cys-120–Cys-130.

The protein resides in the secreted. This chain is Egg protein CP422 (CP422), found in Schistosoma japonicum (Blood fluke).